Reading from the N-terminus, the 422-residue chain is Nuclear hormone receptor family member nhr-54 (422 aa).

Residues 14–92 (SVKCAICYKA…LGMTTENVRT (79 aa)) constitute a DNA-binding region (nuclear receptor). 2 NR C4-type zinc fingers span residues 17 to 37 (CAICYKAGHGQHFGVETCRAC) and 53 to 80 (CTRKSGKCKIGSDETKDVMCKFCRFKKC). The NR LBD domain maps to 161-422 (PDDDVIVELN…VFTEPEFFRV (262 aa)).

Belongs to the nuclear hormone receptor family.

The protein resides in the nucleus. Its function is as follows. Orphan nuclear receptor. In Caenorhabditis elegans, this protein is Nuclear hormone receptor family member nhr-54 (nhr-54).